A 149-amino-acid chain; its full sequence is MKGYSIKEFPERSARARIREIDISLKDAVNVAHFLKGMDLDSAKNVLDNVIEKKVPVPYFRYMDSVSHRKGIGPGRYPVKAARAFKKLLEDVSANAEFKGLSDSLEIVHIAVSKGRMIKKYTPKAYGRAGAFFKDLVNLEVVVRESGEE.

This sequence belongs to the universal ribosomal protein uL22 family. In terms of assembly, part of the 50S ribosomal subunit.

In terms of biological role, this protein binds specifically to 23S rRNA. It makes multiple contacts with different domains of the 23S rRNA in the assembled 50S subunit and ribosome. Functionally, the globular domain of the protein is located near the polypeptide exit tunnel on the outside of the subunit, while an extended beta-hairpin is found that lines the wall of the exit tunnel in the center of the 70S ribosome. The chain is Large ribosomal subunit protein uL22 from Picrophilus torridus (strain ATCC 700027 / DSM 9790 / JCM 10055 / NBRC 100828 / KAW 2/3).